The sequence spans 296 residues: Protoheme IX farnesyltransferase (296 aa).

9 consecutive transmembrane segments (helical) span residues 11–31 (PGII…AAQG), 35–55 (YPLF…GCVF), 84–104 (VTLV…YIAA), 107–127 (LAMW…SLYM), 132–152 (VYGT…GYCA), 162–182 (LILL…IAIF), 208–228 (ITLY…GGYA), 229–249 (GYKY…MALS), and 264–284 (LFVF…VDSM).

This sequence belongs to the UbiA prenyltransferase family. Protoheme IX farnesyltransferase subfamily.

It localises to the cell inner membrane. It catalyses the reaction heme b + (2E,6E)-farnesyl diphosphate + H2O = Fe(II)-heme o + diphosphate. It functions in the pathway porphyrin-containing compound metabolism; heme O biosynthesis; heme O from protoheme: step 1/1. Converts heme B (protoheme IX) to heme O by substitution of the vinyl group on carbon 2 of heme B porphyrin ring with a hydroxyethyl farnesyl side group. This is Protoheme IX farnesyltransferase from Pectobacterium carotovorum subsp. carotovorum (strain PC1).